The following is a 570-amino-acid chain: Sulfite reductase [NADPH] hemoprotein beta-component (570 aa).

Residues Cys-434, Cys-440, Cys-479, and Cys-483 each coordinate [4Fe-4S] cluster. Cys-483 contacts siroheme.

The protein belongs to the nitrite and sulfite reductase 4Fe-4S domain family. As to quaternary structure, alpha(8)-beta(8). The alpha component is a flavoprotein, the beta component is a hemoprotein. It depends on siroheme as a cofactor. Requires [4Fe-4S] cluster as cofactor.

It carries out the reaction hydrogen sulfide + 3 NADP(+) + 3 H2O = sulfite + 3 NADPH + 4 H(+). It participates in sulfur metabolism; hydrogen sulfide biosynthesis; hydrogen sulfide from sulfite (NADPH route): step 1/1. In terms of biological role, component of the sulfite reductase complex that catalyzes the 6-electron reduction of sulfite to sulfide. This is one of several activities required for the biosynthesis of L-cysteine from sulfate. This chain is Sulfite reductase [NADPH] hemoprotein beta-component (cysI), found in Escherichia coli (strain K12).